The sequence spans 312 residues: DNA-directed RNA polymerase subunit alpha (312 aa).

The alpha N-terminal domain (alpha-NTD) stretch occupies residues 1–229 (MLQYQIDRID…ELFQPLATVS (229 aa)). An alpha C-terminal domain (alpha-CTD) region spans residues 239 to 312 (EPAAEAQIPL…ISIPQSRTSA (74 aa)).

It belongs to the RNA polymerase alpha chain family. As to quaternary structure, in cyanobacteria the RNAP catalytic core is composed of 2 alpha, 1 beta, 1 beta', 1 gamma and 1 omega subunit. When a sigma factor is associated with the core the holoenzyme is formed, which can initiate transcription.

The catalysed reaction is RNA(n) + a ribonucleoside 5'-triphosphate = RNA(n+1) + diphosphate. Its function is as follows. DNA-dependent RNA polymerase catalyzes the transcription of DNA into RNA using the four ribonucleoside triphosphates as substrates. This chain is DNA-directed RNA polymerase subunit alpha, found in Prochlorococcus marinus (strain NATL1A).